Here is a 5005-residue protein sequence, read N- to C-terminus: Bridge-like lipid transfer protein family member 1 (5005 aa).

Residues 26 to 46 (NVVWLLVATILSCGWIIYLTY) form a helical membrane-spanning segment. 3 disordered regions span residues 691-721 (LRPS…LPPD), 1218-1257 (LSLQ…SSVA), and 1269-1310 (GTKR…LKRQ). Low complexity-rich tracts occupy residues 700–711 (RVVSSPSTSSRP) and 1226–1240 (SHSS…SSSS). Basic and acidic residues predominate over residues 1248–1257 (GEKESPSSVA). Polar residues predominate over residues 1278-1303 (SIPTEISGNSPVSPNTQDKSVGQSPL). Residues Ser1301, Ser1305, and Ser1323 each carry the phosphoserine modification. Thr1325 is modified (phosphothreonine). Disordered regions lie at residues 1343–1376 (SDVS…SNSF), 1400–1427 (EFEP…QQID), 1521–1548 (TNKR…SSSF), and 1676–1704 (FSEN…QGQA). Ser1355 and Ser1406 each carry phosphoserine. Residues 1521–1530 (TNKRTSKSSL) are compositionally biased toward basic residues. A compositionally biased stretch (polar residues) spans 1691–1704 (TEQSTIGTTNQGQA). Ser1805 and Ser1808 each carry phosphoserine. Disordered regions lie at residues 1924 to 1991 (DTER…PLMP), 2401 to 2420 (SDQN…QDDV), and 2598 to 2677 (TAGS…KDVV). 4 stretches are compositionally biased toward polar residues: residues 1931-1948 (LTSN…YNTD), 1959-1971 (TSPS…NSVS), 2401-2418 (SDQN…TSQD), and 2598-2608 (TAGSASPTPTF). Ser2601 and Ser2603 each carry phosphoserine. Residues 2619-2638 (SDFSRSSRGSLNGGNRVNNA) show a composition bias toward low complexity. A compositionally biased stretch (basic and acidic residues) spans 2643–2665 (TNNENNKKESRNKNSLGRSERRT). Phosphoserine is present on Ser2755. The interval 2928-2967 (RQPSTAPQPVKEDIATPLPSEKTPTSVNQTPVETNEFPQL) is disordered. The span at 2949-2964 (KTPTSVNQTPVETNEF) shows a compositional bias: polar residues. Phosphoserine is present on Ser3562. Residues 3612 to 3622 (PSYSRSKSISA) are compositionally biased toward polar residues. 6 disordered regions span residues 3612–3661 (PSYS…VTFN), 3686–3744 (SSNS…ERFY), 3821–3843 (RRSY…KKFQ), 3914–3954 (YGMK…KGKG), 4088–4146 (GTTY…SSSS), and 4325–4394 (QSAS…KAAS). The residue at position 3653 (Ser3653) is a Phosphoserine. Residues 3686 to 3700 (SSNSEGSCSVFSSPK) are compositionally biased toward polar residues. Residues 3727-3736 (EDSEKDEKDE) are compositionally biased toward acidic residues. A compositionally biased stretch (basic and acidic residues) spans 3821–3837 (RRSYDRSSRSLDQDSPS). 2 stretches are compositionally biased toward polar residues: residues 3931-3940 (TVQSKTNTLL) and 4098-4113 (PGGN…SASK). A compositionally biased stretch (low complexity) spans 4122–4146 (LGSPLGRSRHSSSQSDLTSSSSSSS). The residue at position 4124 (Ser4124) is a Phosphoserine. The segment covering 4325-4358 (QSASFTHMPQSPNVFNEHMTNSTMSPGTVGQSLK) has biased composition (polar residues). Residues 4359–4372 (SPASIRSRSVSDSS) are compositionally biased toward low complexity. Positions 4381-4394 (KTSTPFNKSNKAAS) are enriched in polar residues.

Highly expressed in testis and ovary. Weakly or not expressed in other tissues.

The protein resides in the cell membrane. It localises to the endoplasmic reticulum membrane. It is found in the mitochondrion membrane. Functionally, tube-forming lipid transport protein which provides phosphatidylethanolamine for glycosylphosphatidylinositol (GPI) anchor synthesis in the endoplasmic reticulum. Plays a role in endosomal trafficking and endosome recycling. Also involved in the actin cytoskeleton and cilia structural dynamics. Acts as a regulator of phagocytosis. This Homo sapiens (Human) protein is Bridge-like lipid transfer protein family member 1.